A 155-amino-acid chain; its full sequence is Aspartate carbamoyltransferase regulatory chain (155 aa).

Residues Cys113, Cys118, Cys139, and Cys142 each contribute to the Zn(2+) site.

It belongs to the PyrI family. Contains catalytic and regulatory chains. Requires Zn(2+) as cofactor.

In terms of biological role, involved in allosteric regulation of aspartate carbamoyltransferase. The chain is Aspartate carbamoyltransferase regulatory chain from Methanospirillum hungatei JF-1 (strain ATCC 27890 / DSM 864 / NBRC 100397 / JF-1).